Reading from the N-terminus, the 550-residue chain is Methionine--tRNA ligase (550 aa).

Positions 13 to 23 (PYANGPLHFGH) match the 'HIGH' region motif. Residues cysteine 145, cysteine 148, cysteine 158, and cysteine 161 each coordinate Zn(2+). Residues 331–335 (QFSKS) carry the 'KMSKS' region motif. Position 334 (lysine 334) interacts with ATP.

This sequence belongs to the class-I aminoacyl-tRNA synthetase family. MetG type 1 subfamily. Monomer. It depends on Zn(2+) as a cofactor.

The protein localises to the cytoplasm. The enzyme catalyses tRNA(Met) + L-methionine + ATP = L-methionyl-tRNA(Met) + AMP + diphosphate. Is required not only for elongation of protein synthesis but also for the initiation of all mRNA translation through initiator tRNA(fMet) aminoacylation. The chain is Methionine--tRNA ligase from Chlamydia trachomatis serovar L2b (strain UCH-1/proctitis).